Reading from the N-terminus, the 490-residue chain is Bifunctional IPC transferase and DIPP synthase (490 aa).

Residues 72–290 (LMKAVILAAG…RANRALVSAA (219 aa)) are mobA-like NTP transferase. CTP is bound by residues 78–80 (LAA), lysine 91, aspartate 144, and glutamate 180. Glutamate 180 contributes to the Mg(2+) binding site. Positions 291 to 490 (VKGSGDGFIS…VTLLAVLVSK (200 aa)) are CDP-alcohol phosphatidyltransferases. A run of 4 helical transmembrane segments spans residues 329-349 (FLVG…AGLL), 389-409 (FLAI…FAIF), 447-467 (IFLI…IFWM), and 468-488 (FLFV…AVLV).

In the N-terminal section; belongs to the MobA family. It in the C-terminal section; belongs to the CDP-alcohol phosphatidyltransferase class-I family. In terms of assembly, forms a mixture of monomers and dimers in solution, with prevalence of the monomeric form. The cofactor is Mg(2+).

It is found in the membrane. It catalyses the reaction 1D-myo-inositol 3-phosphate + CTP + H(+) = CDP-1L-myo-inositol + diphosphate. It carries out the reaction CDP-1L-myo-inositol + 1D-myo-inositol 3-phosphate = bis(1L-myo-inositol) 3,1'-phosphate 1-phosphate + CMP + H(+). Its function is as follows. Involved in biosynthesis of di-myo-inositol phosphate (DIP), a widespread organic solute in microorganisms adapted to hot environments. Catalyzes the condensation of CTP and L-myo-inositol-1-phosphate into CDP-L-myo-inositol, as well as the biosynthesis of di-myo-inositol-1,3'-phosphate-1'-phosphate (DIPP) from CDP-L-myo-inositol and L-myo-inositol-1-phosphate. The cytidylyltransferase is absolutely specific for CTP and L-myo-inositol-1-P. The DIPP synthase uses only L-myoinositol-1-phosphate as an alcohol acceptor, but CDP-glycerol, as well as CDP-L-myo-inositol and CDP-D-myoinositol, are recognized as alcohol donors. In Archaeoglobus fulgidus (strain ATCC 49558 / DSM 4304 / JCM 9628 / NBRC 100126 / VC-16), this protein is Bifunctional IPC transferase and DIPP synthase.